The following is a 101-amino-acid chain: Small ribosomal subunit protein uS14c (101 aa).

The protein belongs to the universal ribosomal protein uS14 family. Part of the 30S ribosomal subunit.

The protein resides in the plastid. Functionally, binds 16S rRNA, required for the assembly of 30S particles. The sequence is that of Small ribosomal subunit protein uS14c from Helicosporidium sp. subsp. Simulium jonesii (Green alga).